The primary structure comprises 244 residues: L-xylulose reductase (244 aa).

Position 1 is an N-acetylmethionine (M1). NADP(+) is bound at residue 11–39 (LVTGAGKGIGRSTVLALQAAGAHVVAVSR). Position 21 is an omega-N-methylarginine (R21). Residue S46 is modified to Phosphoserine. Residue S136 participates in substrate binding. The active-site Proton acceptor is Y149. K153 is a catalytic residue.

It belongs to the short-chain dehydrogenases/reductases (SDR) family. Homotetramer. As to expression, highly expressed in kidney and liver. Expressed in epididymis. Weakly expressed in brain, heart, lung, spleen and testis.

It localises to the membrane. Its subcellular location is the cytoplasmic vesicle. The protein resides in the secretory vesicle. It is found in the acrosome. It catalyses the reaction xylitol + NADP(+) = L-xylulose + NADPH + H(+). Catalyzes the NADPH-dependent reduction of several pentoses, tetroses, trioses, alpha-dicarbonyl compounds and L-xylulose. Participates in the uronate cycle of glucose metabolism. May play a role in the water absorption and cellular osmoregulation in the proximal renal tubules by producing xylitol, an osmolyte, thereby preventing osmolytic stress from occurring in the renal tubules. This chain is L-xylulose reductase (DCXR), found in Mesocricetus auratus (Golden hamster).